The primary structure comprises 801 residues: Interleukin-4 receptor subunit alpha (801 aa).

An N-terminal signal peptide occupies residues methionine 1–glycine 25. At isoleucine 26 to arginine 232 the chain is on the extracellular side. Residues cysteine 34 and cysteine 44 are joined by a disulfide bond. The N-linked (GlcNAc...) asparagine glycan is linked to asparagine 71. Cysteines 74 and 86 form a disulfide. A Fibronectin type-III domain is found at alanine 125–asparagine 223. 3 N-linked (GlcNAc...) asparagine glycosylation sites follow: asparagine 128, asparagine 134, and asparagine 162. Serine 164 carries the post-translational modification Phosphoserine. Asparagine 176 carries N-linked (GlcNAc...) asparagine glycosylation. The WSXWS motif motif lies at tryptophan 212–serine 216. Residues leucine 233 to isoleucine 256 traverse the membrane as a helical segment. Over lysine 257–serine 801 the chain is Cytoplasmic. Residues tryptophan 262 to alanine 270 carry the Box 1 motif motif. The disordered stretch occupies residues valine 424 to glycine 476. The span at glutamine 426 to serine 444 shows a compositional bias: low complexity. A required for IRS1 activation and IL4-induced cell growth region spans residues glutamate 439–serine 549. The span at proline 454–glutamine 465 shows a compositional bias: polar residues. At tyrosine 492 the chain carries Phosphotyrosine. Residues arginine 493–alanine 515 form a disordered region. Residues serine 549–leucine 644 are required for IL4-induced gene expression. Phosphotyrosine occurs at positions 566, 594, and 622. Positions isoleucine 698 to leucine 703 match the ITIM motif motif. A disordered region spans residues arginine 767–serine 801.

This sequence belongs to the type I cytokine receptor family. Type 4 subfamily. As to quaternary structure, the functional IL4 receptor is formed by initial binding of IL4 to IL4R. Subsequent recruitment to the complex of the common gamma chain, in immune cells, creates a type I receptor and, in non-immune cells, of IL13RA1 forms a type II receptor. IL4R can also interact with the IL13/IL13RA1 complex to form a similar type II receptor. Interacts with PIK3C3. Interacts with the SH2-containing phosphatases, PTPN6/SHIP1, PTPN11/SHIP2 and INPP5D/SHIP. Interacts with JAK1 through a Box 1-containing region; inhibited by SOCS5. Interacts with SOCS5; inhibits IL4 signaling. Interacts with JAK3. Interacts with CLM1. Interacts with IL13RA2. On IL4 binding, phosphorylated on C-terminal tyrosine residues. As to expression, isoform 2 is expressed in kidney, spleen, lung and liver.

It localises to the cell membrane. The protein resides in the secreted. In terms of biological role, receptor for both interleukin 4 and interleukin 13. Couples to the JAK1/2/3-STAT6 pathway. The IL4 response is involved in promoting Th2 differentiation. The IL4/IL13 responses are involved in regulating IgE production and, chemokine and mucus production at sites of allergic inflammation. In certain cell types, can signal through activation of insulin receptor substrates, IRS1/IRS2. Its function is as follows. Isoform 2 (soluble form) inhibits IL4-induced spleen cell proliferation. This chain is Interleukin-4 receptor subunit alpha (Il4r), found in Rattus norvegicus (Rat).